The primary structure comprises 472 residues: Methylenetetrahydrofolate--tRNA-(uracil-5-)-methyltransferase TrmFO (472 aa).

10–15 (GGGLAG) contacts FAD.

This sequence belongs to the MnmG family. TrmFO subfamily. It depends on FAD as a cofactor.

It is found in the cytoplasm. The catalysed reaction is uridine(54) in tRNA + (6R)-5,10-methylene-5,6,7,8-tetrahydrofolate + NADH + H(+) = 5-methyluridine(54) in tRNA + (6S)-5,6,7,8-tetrahydrofolate + NAD(+). The enzyme catalyses uridine(54) in tRNA + (6R)-5,10-methylene-5,6,7,8-tetrahydrofolate + NADPH + H(+) = 5-methyluridine(54) in tRNA + (6S)-5,6,7,8-tetrahydrofolate + NADP(+). Catalyzes the folate-dependent formation of 5-methyl-uridine at position 54 (M-5-U54) in all tRNAs. This chain is Methylenetetrahydrofolate--tRNA-(uracil-5-)-methyltransferase TrmFO, found in Mesorhizobium japonicum (strain LMG 29417 / CECT 9101 / MAFF 303099) (Mesorhizobium loti (strain MAFF 303099)).